The primary structure comprises 178 residues: Inner membrane-spanning protein YciB (178 aa).

5 helical membrane passes run 22–42 (IFVASGALIVASAIALAVSWL), 50–70 (MALFTFALVAIFGTLTIALHN), 76–96 (WKVTIIYGLFTLALLFSHWFM), 121–141 (IAWALFFLACGLANIYVAFWL), and 149–169 (FKVFGLSGLTLLFTLLSGIYI).

It belongs to the YciB family.

Its subcellular location is the cell inner membrane. In terms of biological role, plays a role in cell envelope biogenesis, maintenance of cell envelope integrity and membrane homeostasis. This Erwinia tasmaniensis (strain DSM 17950 / CFBP 7177 / CIP 109463 / NCPPB 4357 / Et1/99) protein is Inner membrane-spanning protein YciB.